The following is a 314-amino-acid chain: MVTYLLANFGGPRTSQEIVSFLQALLTDRDVTGGMIPSMLHRPLFSYIAKRRAPHVARQYAYLGGGSPIFQDTERLAQNLSQELQASVIPFHRYLPETHRETLQALQESQGSIVGIPLFPHYTFAVTGSIIRFFLQHLPEKPISWITQFGVHPEFVSCMQQHIRDCLAAQQIAVEDCYFLFSVHGLPQRHIRLGDPYAQQCQASFEALRGELEGKIAFQSKFGIGKWLDPSTQEVCQSLRTKKRYIVIVPFGFVSDHIETLHEIDHLYVPILLQKGYRVVRIPAINASSRWVSSLAAIVRSSPQETSLEPLLMP.

2 residues coordinate Fe cation: His184 and Glu259.

The protein belongs to the ferrochelatase family.

It localises to the cytoplasm. It catalyses the reaction heme b + 2 H(+) = protoporphyrin IX + Fe(2+). It participates in porphyrin-containing compound metabolism; protoheme biosynthesis; protoheme from protoporphyrin-IX: step 1/1. Its function is as follows. Catalyzes the ferrous insertion into protoporphyrin IX. This Chlamydia trachomatis serovar D (strain ATCC VR-885 / DSM 19411 / UW-3/Cx) protein is Ferrochelatase.